We begin with the raw amino-acid sequence, 101 residues long: uncharacterized protein (101 aa).

Residues 68–90 (LAFAFCGRANTFISCFISFASLI) traverse the membrane as a helical segment.

It localises to the membrane. This is an uncharacterized protein from Saccharomyces cerevisiae (strain ATCC 204508 / S288c) (Baker's yeast).